A 618-amino-acid polypeptide reads, in one-letter code: 1-deoxy-D-xylulose-5-phosphate synthase (618 aa).

Thiamine diphosphate contacts are provided by residues His-76 and 117–119; that span reads GHS. Asp-148 is a Mg(2+) binding site. Residues 149-150, Asn-177, Tyr-284, and Glu-366 each bind thiamine diphosphate; that span reads GA. Asn-177 is a Mg(2+) binding site.

It belongs to the transketolase family. DXPS subfamily. As to quaternary structure, homodimer. Requires Mg(2+) as cofactor. Thiamine diphosphate is required as a cofactor.

It catalyses the reaction D-glyceraldehyde 3-phosphate + pyruvate + H(+) = 1-deoxy-D-xylulose 5-phosphate + CO2. The protein operates within metabolic intermediate biosynthesis; 1-deoxy-D-xylulose 5-phosphate biosynthesis; 1-deoxy-D-xylulose 5-phosphate from D-glyceraldehyde 3-phosphate and pyruvate: step 1/1. Catalyzes the acyloin condensation reaction between C atoms 2 and 3 of pyruvate and glyceraldehyde 3-phosphate to yield 1-deoxy-D-xylulose-5-phosphate (DXP). The protein is 1-deoxy-D-xylulose-5-phosphate synthase of Dechloromonas aromatica (strain RCB).